Reading from the N-terminus, the 213-residue chain is Protein RCR1 (213 aa).

The Lumenal segment spans residues 1–39 (MGLISYENEAINEVKKADNHHVSKFVTSYYGPSSSSWQS). The chain crosses the membrane as a helical span at residues 40–62 (GIWILFVLFVAAVILIILFTFVA). Over 63–213 (NRRRRRMGRA…PERAKVNARS (151 aa)) the chain is Cytoplasmic. Residues 104 to 107 (VPEY) carry the PY motif motif. Residues 190-213 (ERLPGGTTTQEINPPERAKVNARS) form a disordered region. A compositionally biased stretch (basic and acidic residues) spans 203–213 (PPERAKVNARS).

In terms of assembly, interacts with PMT4 and WW domain of RSP5.

It localises to the endoplasmic reticulum membrane. Regulates chitin deposition in the cell wall. The chain is Protein RCR1 (RCR1) from Saccharomyces cerevisiae (strain ATCC 204508 / S288c) (Baker's yeast).